The primary structure comprises 303 residues: MATKAAFARMNGLGNQIIVADMRGRADSITSAAAIRLASDSETAFDQIMAIHDPRTPGTDYYIAIINCDGTQAQACGNGTRCVVQALAAETGRHAFTFETRAGILTATEHDDGLISVDMGTPRFDWQDIPLAQAVADTRKIELQVDPADAPVLHSPSIASMGNPHAVFWVDKDVWSYELDKFGPLLENHPIFPERANISIAHVTSSDTIDLRTWERGAGLTRACGSAACAAAVSAARTGRTGRKVTVNVPGGPLLIEWRDDDHVMMTGPAEWEFSGTFDPATGEWSRDTQGLQGSGNADRGAA.

Asparagine 15, glutamine 47, and asparagine 67 together coordinate substrate. The Proton donor role is filled by cysteine 76. Substrate-binding positions include 77-78 (GN), asparagine 163, asparagine 197, and 215-216 (ER). The active-site Proton acceptor is cysteine 224. Substrate is bound at residue 225-226 (GS). A disordered region spans residues 278–303 (FDPATGEWSRDTQGLQGSGNADRGAA).

Belongs to the diaminopimelate epimerase family. In terms of assembly, homodimer.

It localises to the cytoplasm. The catalysed reaction is (2S,6S)-2,6-diaminopimelate = meso-2,6-diaminopimelate. It functions in the pathway amino-acid biosynthesis; L-lysine biosynthesis via DAP pathway; DL-2,6-diaminopimelate from LL-2,6-diaminopimelate: step 1/1. In terms of biological role, catalyzes the stereoinversion of LL-2,6-diaminopimelate (L,L-DAP) to meso-diaminopimelate (meso-DAP), a precursor of L-lysine and an essential component of the bacterial peptidoglycan. The chain is Diaminopimelate epimerase from Brucella melitensis biotype 1 (strain ATCC 23456 / CCUG 17765 / NCTC 10094 / 16M).